The primary structure comprises 529 residues: Bifunctional purine biosynthesis protein PurH (529 aa).

Residues 1–148 (MQQRRPVRRA…KNHKDVAIVV (148 aa)) form the MGS-like domain.

Belongs to the PurH family.

The enzyme catalyses (6R)-10-formyltetrahydrofolate + 5-amino-1-(5-phospho-beta-D-ribosyl)imidazole-4-carboxamide = 5-formamido-1-(5-phospho-D-ribosyl)imidazole-4-carboxamide + (6S)-5,6,7,8-tetrahydrofolate. It carries out the reaction IMP + H2O = 5-formamido-1-(5-phospho-D-ribosyl)imidazole-4-carboxamide. Its pathway is purine metabolism; IMP biosynthesis via de novo pathway; 5-formamido-1-(5-phospho-D-ribosyl)imidazole-4-carboxamide from 5-amino-1-(5-phospho-D-ribosyl)imidazole-4-carboxamide (10-formyl THF route): step 1/1. The protein operates within purine metabolism; IMP biosynthesis via de novo pathway; IMP from 5-formamido-1-(5-phospho-D-ribosyl)imidazole-4-carboxamide: step 1/1. The chain is Bifunctional purine biosynthesis protein PurH from Salmonella heidelberg (strain SL476).